The following is a 397-amino-acid chain: Tryptophan synthase beta chain (397 aa).

At K86 the chain carries N6-(pyridoxal phosphate)lysine.

The protein belongs to the TrpB family. Tetramer of two alpha and two beta chains. It depends on pyridoxal 5'-phosphate as a cofactor.

The catalysed reaction is (1S,2R)-1-C-(indol-3-yl)glycerol 3-phosphate + L-serine = D-glyceraldehyde 3-phosphate + L-tryptophan + H2O. It functions in the pathway amino-acid biosynthesis; L-tryptophan biosynthesis; L-tryptophan from chorismate: step 5/5. Functionally, the beta subunit is responsible for the synthesis of L-tryptophan from indole and L-serine. This Aeromonas hydrophila subsp. hydrophila (strain ATCC 7966 / DSM 30187 / BCRC 13018 / CCUG 14551 / JCM 1027 / KCTC 2358 / NCIMB 9240 / NCTC 8049) protein is Tryptophan synthase beta chain.